Here is a 75-residue protein sequence, read N- to C-terminus: Protein EGO2 (75 aa).

This chain is Protein EGO2, found in Saccharomyces cerevisiae (strain ATCC 204508 / S288c) (Baker's yeast).